A 237-amino-acid polypeptide reads, in one-letter code: Phosphoglycolate phosphatase (237 aa).

Asp-15 acts as the Nucleophile in catalysis. The Mg(2+) site is built by Asp-15, Asp-17, and Asp-177.

It belongs to the HAD-like hydrolase superfamily. CbbY/CbbZ/Gph/YieH family. Requires Mg(2+) as cofactor.

It carries out the reaction 2-phosphoglycolate + H2O = glycolate + phosphate. The protein operates within organic acid metabolism; glycolate biosynthesis; glycolate from 2-phosphoglycolate: step 1/1. Specifically catalyzes the dephosphorylation of 2-phosphoglycolate. Is involved in the dissimilation of the intracellular 2-phosphoglycolate formed during the DNA repair of 3'-phosphoglycolate ends, a major class of DNA lesions induced by oxidative stress. The sequence is that of Phosphoglycolate phosphatase from Caulobacter vibrioides (strain ATCC 19089 / CIP 103742 / CB 15) (Caulobacter crescentus).